Here is a 532-residue protein sequence, read N- to C-terminus: Type 2 DNA topoisomerase 6 subunit B (532 aa).

ATP contacts are provided by residues asparagine 41, aspartate 75, 96–97 (SK), 105–112 (GMYGLGVK), and lysine 427.

The protein belongs to the TOP6B family. Homodimer. Heterotetramer of two Top6A and two Top6B chains.

The enzyme catalyses ATP-dependent breakage, passage and rejoining of double-stranded DNA.. In terms of biological role, relaxes both positive and negative superturns and exhibits a strong decatenase activity. This chain is Type 2 DNA topoisomerase 6 subunit B, found in Sulfurisphaera tokodaii (strain DSM 16993 / JCM 10545 / NBRC 100140 / 7) (Sulfolobus tokodaii).